A 43-amino-acid polypeptide reads, in one-letter code: Augerpeptide hhe9.2 (43 aa).

Residues 2 to 40 (EEVGCFPNVCKNDGNCSIETSTGMTRCQCLEGYTGHVCE) enclose the EGF-like domain. 3 disulfides stabilise this stretch: Cys-6-Cys-28, Cys-11-Cys-30, and Cys-17-Cys-39.

As to expression, expressed by the venom duct.

The protein resides in the secreted. This is Augerpeptide hhe9.2 from Hastula hectica (Sea snail).